Consider the following 412-residue polypeptide: Putative competence-damage inducible protein (412 aa).

This sequence belongs to the CinA family.

The protein is Putative competence-damage inducible protein of Bacillus cereus (strain AH187).